A 353-amino-acid polypeptide reads, in one-letter code: Putative glycosyltransferase TagX (353 aa).

This sequence belongs to the glycosyltransferase 2 family.

The polypeptide is Putative glycosyltransferase TagX (tagX) (Staphylococcus aureus (strain MSSA476)).